A 2065-amino-acid polypeptide reads, in one-letter code: WD repeat-containing protein 81 (2065 aa).

The BEACH domain occupies 325 to 617; sequence LCRNCQDELK…EPPHFGRVNV (293 aa). 4 disordered regions span residues 1082-1111, 1156-1230, 1271-1290, and 1595-1642; these read EEEEYECDDRRSSNATSSGKVGGGSGGGSG, TTVG…VEDR, GEKNMEEEETEHDPLEDSEE, and ASPG…GGDI. The span at 1101–1111 shows a compositional bias: gly residues; that stretch reads KVGGGSGGGSG. Residues 1156–1169 are compositionally biased toward polar residues; that stretch reads TTVGTKQQNQSTAN. The segment covering 1213–1228 has biased composition (acidic residues); the sequence is DGEDGGELEDEEETVE. Over residues 1624-1637 the composition is skewed to low complexity; the sequence is SRSPFPAPSSTSTP. WD repeat units follow at residues 1767-1806, 1813-1853, 1906-1945, 1948-1986, and 2035-2065; these read GHSGTAKCLAPLAGEDYFLSGSKDKTVRLWPLYNHGDGTR, TYTE…NIRC, LSAGLIRCLAVSPGGRTIAAGFSTGFIVLLDARTGLVLRG, GHEGDILQMKAAEGNLLVSSSSDHTLTVWKDVEHKPLHQ, and NFRGTLTSLSVLPTKRLLLLGSDNGAIRLLA.

Belongs to the WD repeat WDR81 family. In terms of tissue distribution, widely expressed.

The protein resides in the early endosome membrane. It is found in the late endosome membrane. It localises to the lysosome membrane. The protein localises to the cytoplasmic vesicle. Its subcellular location is the autophagosome membrane. The protein resides in the mitochondrion. It is found in the cytoplasm. It localises to the cytosol. In terms of biological role, functions as a negative regulator of the PI3 kinase/PI3K activity associated with endosomal membranes. By modifying the phosphatidylinositol 3-phosphate/PtdInsP3 content of endosomal membranes may regulate endosome fusion, recycling, sorting and early to late endosome transport. May also play a role in aggrephagy, the macroautophagic degradation of ubiquitinated protein aggregates. May also be involved in maintenance of normal mitochondrial structure and organization. This is WD repeat-containing protein 81 (wdr81) from Danio rerio (Zebrafish).